The chain runs to 789 residues: Probable phosphoketolase 1 (789 aa).

It belongs to the XFP family. Thiamine diphosphate serves as cofactor.

The protein is Probable phosphoketolase 1 of Rhizobium meliloti (strain 1021) (Ensifer meliloti).